The following is a 216-amino-acid chain: Uracil phosphoribosyltransferase (216 aa).

5-phospho-alpha-D-ribose 1-diphosphate contacts are provided by residues R85, R110, and 135–143 (DPMVATGYS). Uracil contacts are provided by residues I200 and 205–207 (GDA). Position 206 (D206) interacts with 5-phospho-alpha-D-ribose 1-diphosphate.

Belongs to the UPRTase family. Mg(2+) serves as cofactor.

The enzyme catalyses UMP + diphosphate = 5-phospho-alpha-D-ribose 1-diphosphate + uracil. Its pathway is pyrimidine metabolism; UMP biosynthesis via salvage pathway; UMP from uracil: step 1/1. With respect to regulation, allosterically activated by GTP. Functionally, catalyzes the conversion of uracil and 5-phospho-alpha-D-ribose 1-diphosphate (PRPP) to UMP and diphosphate. This chain is Uracil phosphoribosyltransferase, found in Ralstonia pickettii (strain 12J).